The primary structure comprises 229 residues: Glutathione S-transferase 1 (229 aa).

The GST N-terminal domain maps to 2–83 (SPVKVFGHPM…YILRKYGGTA (82 aa)). Residues 41–42 (HK), 54–55 (KM), and 67–68 (ES) contribute to the glutathione site. The 131-residue stretch at 93-223 (GIEELAMVDV…RVCKHMPTEF (131 aa)) folds into the GST C-terminal domain.

Belongs to the GST superfamily. Phi family.

It catalyses the reaction RX + glutathione = an S-substituted glutathione + a halide anion + H(+). Conjugation of reduced glutathione to a wide number of exogenous and endogenous hydrophobic electrophiles. This Triticum aestivum (Wheat) protein is Glutathione S-transferase 1 (GSTA1).